The primary structure comprises 460 residues: Nitrogenase iron-iron protein beta chain (460 aa).

C20, C45, C104, and S143 together coordinate [8Fe-7S] cluster.

The protein belongs to the NifD/NifK/NifE/NifN family. Hexamer of two alpha, two beta, and two delta chains. [8Fe-7S] cluster serves as cofactor.

The enzyme catalyses N2 + 8 reduced [2Fe-2S]-[ferredoxin] + 16 ATP + 16 H2O = H2 + 8 oxidized [2Fe-2S]-[ferredoxin] + 2 NH4(+) + 16 ADP + 16 phosphate + 6 H(+). In terms of biological role, this iron-iron protein is part of the nitrogenase complex that catalyzes the key enzymatic reactions in nitrogen fixation. Other nitrogenase complexes utilize a molybdenum-iron protein or a vanadium-iron protein. The protein is Nitrogenase iron-iron protein beta chain (anfK) of Rhodobacter capsulatus (Rhodopseudomonas capsulata).